The chain runs to 220 residues: Chaperone protein TorD (220 aa).

It belongs to the TorD/DmsD family. TorD subfamily.

Its subcellular location is the cytoplasm. Functionally, involved in the biogenesis of TorA. Acts on TorA before the insertion of the molybdenum cofactor and, as a result, probably favors a conformation of the apoenzyme that is competent for acquiring the cofactor. The protein is Chaperone protein TorD of Vibrio cholerae serotype O1 (strain ATCC 39315 / El Tor Inaba N16961).